Consider the following 692-residue polypeptide: MADPASYRPPPGSIPETPGVYRFRDEHGRVIYVGKAKSLRARLANYFADIHTLHPRTQHMVTTAGSVEWTVVSTEVEALQLEYTWIKEFDPRFNVRYRDDKSYPSLAVTLYEEFPRLQVMRGPKRRGVRYFGPYAHAWAIRETLDLLLRVFPARTCSSGVFKRAGQVGRPCLLGYIDRCSAPCVGRVDADAHRQIVDDFCDFMSGQTGRYLRRLEREMRAAAEAQEYERAARLRDDIGALRRAVEKQAVVLPDGTDADVIAFAQDELEAAVQIFYVRGGRVRGQRGWVVDKLEDVTTADLVEQFLTQEYLDGVRPAGTAGTADTADTADTADPAPAAQIPREILVPELPPDAEAVAELLERARGARVDLRVPRRGDKRTLMETVERNAKQAFTLHRTKRAGDLTARSRALADLQEALELPDAPLRIECFDVSNTQGTDVVASMVVFEDGLPRKSEYRRFSIRGVDGQDDVASMRETVHRRFSRYLAERARTGELEEYPGAPTGDDEAPETGRPRRFAYPPNLVVVDGGPPQVAAAARALDELGIESGPGGVALCGLAKRLEEVWLPDQDEPVILPRTSEALYLLQRVRDEAHRFAITYHRQKRSTSMVASALDDVPGLGETRRKALLRHFGSVAKVRAAGAEEIAQVPGIGPRTAEAIVAALARSAPGTDAAPAPAVDPLTGEIIDSAGVTR.

Positions 16–95 constitute a GIY-YIG domain; sequence ETPGVYRFRD…IKEFDPRFNV (80 aa). In terms of domain architecture, UVR spans 208-243; it reads GRYLRRLEREMRAAAEAQEYERAARLRDDIGALRRA. The tract at residues 492 to 511 is disordered; that stretch reads GELEEYPGAPTGDDEAPETG.

This sequence belongs to the UvrC family. Interacts with UvrB in an incision complex.

It is found in the cytoplasm. Its function is as follows. The UvrABC repair system catalyzes the recognition and processing of DNA lesions. UvrC both incises the 5' and 3' sides of the lesion. The N-terminal half is responsible for the 3' incision and the C-terminal half is responsible for the 5' incision. This Parafrankia sp. (strain EAN1pec) protein is UvrABC system protein C.